Here is a 116-residue protein sequence, read N- to C-terminus: NADH-ubiquinone oxidoreductase chain 3 (116 aa).

3 consecutive transmembrane segments (helical) span residues 3 to 23, 56 to 76, and 87 to 107; these read LITT…TISF, FFLI…LLPL, and LTLI…IYEW.

Belongs to the complex I subunit 3 family.

Its subcellular location is the mitochondrion membrane. The enzyme catalyses a ubiquinone + NADH + 5 H(+)(in) = a ubiquinol + NAD(+) + 4 H(+)(out). In terms of biological role, core subunit of the mitochondrial membrane respiratory chain NADH dehydrogenase (Complex I) that is believed to belong to the minimal assembly required for catalysis. Complex I functions in the transfer of electrons from NADH to the respiratory chain. The immediate electron acceptor for the enzyme is believed to be ubiquinone. This chain is NADH-ubiquinone oxidoreductase chain 3 (MT-ND3), found in Oncorhynchus tshawytscha (Chinook salmon).